Here is a 134-residue protein sequence, read N- to C-terminus: Large ribosomal subunit protein bL20 (134 aa).

The protein belongs to the bacterial ribosomal protein bL20 family.

In terms of biological role, binds directly to 23S ribosomal RNA and is necessary for the in vitro assembly process of the 50S ribosomal subunit. It is not involved in the protein synthesizing functions of that subunit. The sequence is that of Large ribosomal subunit protein bL20 from Rhizobium leguminosarum bv. trifolii (strain WSM2304).